A 147-amino-acid chain; its full sequence is Acidic phospholipase A2 S3-24 (147 aa).

Positions 1-19 (MYPAHLLVLLAVCVSLLGA) are cleaved as a signal peptide. Residues 20–27 (SDMPPQPL) constitute a propeptide that is removed on maturation. 7 cysteine pairs are disulfide-bonded: Cys-38/Cys-99, Cys-54/Cys-146, Cys-56/Cys-72, Cys-71/Cys-127, Cys-78/Cys-120, Cys-88/Cys-113, and Cys-106/Cys-118. Residues Tyr-55, Gly-57, and Gly-59 each contribute to the Ca(2+) site. His-75 is an active-site residue. Asp-76 provides a ligand contact to Ca(2+). The active site involves Asp-121.

Belongs to the phospholipase A2 family. Group I subfamily. D49 sub-subfamily. Ca(2+) serves as cofactor. In terms of tissue distribution, expressed by the venom gland.

It is found in the secreted. It catalyses the reaction a 1,2-diacyl-sn-glycero-3-phosphocholine + H2O = a 1-acyl-sn-glycero-3-phosphocholine + a fatty acid + H(+). Snake venom phospholipase A2 (PLA2) that inhibits collagen-induced platelet aggregation. PLA2 catalyzes the calcium-dependent hydrolysis of the 2-acyl groups in 3-sn-phosphoglycerides. The protein is Acidic phospholipase A2 S3-24 of Austrelaps superbus (Lowland copperhead snake).